The primary structure comprises 321 residues: Lipoyl synthase (321 aa).

[4Fe-4S] cluster is bound by residues C68, C73, C79, C94, C98, C101, and S308. One can recognise a Radical SAM core domain in the interval 80–297 (FNHGTATFMI…KVLADELGFT (218 aa)).

Belongs to the radical SAM superfamily. Lipoyl synthase family. Requires [4Fe-4S] cluster as cofactor.

It is found in the cytoplasm. The enzyme catalyses [[Fe-S] cluster scaffold protein carrying a second [4Fe-4S](2+) cluster] + N(6)-octanoyl-L-lysyl-[protein] + 2 oxidized [2Fe-2S]-[ferredoxin] + 2 S-adenosyl-L-methionine + 4 H(+) = [[Fe-S] cluster scaffold protein] + N(6)-[(R)-dihydrolipoyl]-L-lysyl-[protein] + 4 Fe(3+) + 2 hydrogen sulfide + 2 5'-deoxyadenosine + 2 L-methionine + 2 reduced [2Fe-2S]-[ferredoxin]. It functions in the pathway protein modification; protein lipoylation via endogenous pathway; protein N(6)-(lipoyl)lysine from octanoyl-[acyl-carrier-protein]: step 2/2. In terms of biological role, catalyzes the radical-mediated insertion of two sulfur atoms into the C-6 and C-8 positions of the octanoyl moiety bound to the lipoyl domains of lipoate-dependent enzymes, thereby converting the octanoylated domains into lipoylated derivatives. The sequence is that of Lipoyl synthase from Shewanella sp. (strain ANA-3).